The following is a 320-amino-acid chain: Transcription termination/antitermination protein NusG (320 aa).

This sequence belongs to the NusG family.

Participates in transcription elongation, termination and antitermination. The protein is Transcription termination/antitermination protein NusG of Mycoplasma pneumoniae (strain ATCC 29342 / M129 / Subtype 1) (Mycoplasmoides pneumoniae).